The following is a 380-amino-acid chain: O-phospho-L-seryl-tRNA:Cys-tRNA synthase (380 aa).

Pyridoxal 5'-phosphate contacts are provided by residues 86–87 (AR), N192, and 215–217 (SGH). Residue K218 is modified to N6-(pyridoxal phosphate)lysine.

Belongs to the SepCysS family. As to quaternary structure, homodimer. Interacts with SepRS. Pyridoxal 5'-phosphate is required as a cofactor.

It catalyses the reaction O-phospho-L-seryl-tRNA(Cys) + hydrogen sulfide + H(+) = L-cysteinyl-tRNA(Cys) + phosphate. Its function is as follows. Converts O-phospho-L-seryl-tRNA(Cys) (Sep-tRNA(Cys)) to L-cysteinyl-tRNA(Cys) (Cys-tRNA(Cys)). This Methanococcus maripaludis (strain C5 / ATCC BAA-1333) protein is O-phospho-L-seryl-tRNA:Cys-tRNA synthase.